Reading from the N-terminus, the 467-residue chain is Proton extrusion protein PxcA (467 aa).

Positions 183–205 (TSPPQLIRPRTEQNKKPRGKADT) are disordered. A compositionally biased stretch (basic and acidic residues) spans 191–203 (PRTEQNKKPRGKA). The next 4 helical transmembrane spans lie at 249–269 (FILL…ALIV), 352–372 (IFSV…IMVL), 391–411 (IIIL…WEVI), and 427–447 (FIFL…KYWI).

It belongs to the CemA family.

It is found in the cell inner membrane. Its function is as follows. Required for H(+) efflux immediately after light irradiation to form a rapid H(+) concentration gradient across the thylakoid membranes. Together with PxcL, contributes to transient H(+) uptake following dark to light transition. The chain is Proton extrusion protein PxcA from Trichormus variabilis (strain ATCC 29413 / PCC 7937) (Anabaena variabilis).